The sequence spans 260 residues: Thiazole synthase (260 aa).

The active-site Schiff-base intermediate with DXP is Lys-96. 1-deoxy-D-xylulose 5-phosphate-binding positions include Gly-157, 184–185 (AG), and 206–207 (NT).

Belongs to the ThiG family. Homotetramer. Forms heterodimers with either ThiH or ThiS.

It is found in the cytoplasm. It catalyses the reaction [ThiS sulfur-carrier protein]-C-terminal-Gly-aminoethanethioate + 2-iminoacetate + 1-deoxy-D-xylulose 5-phosphate = [ThiS sulfur-carrier protein]-C-terminal Gly-Gly + 2-[(2R,5Z)-2-carboxy-4-methylthiazol-5(2H)-ylidene]ethyl phosphate + 2 H2O + H(+). It participates in cofactor biosynthesis; thiamine diphosphate biosynthesis. Catalyzes the rearrangement of 1-deoxy-D-xylulose 5-phosphate (DXP) to produce the thiazole phosphate moiety of thiamine. Sulfur is provided by the thiocarboxylate moiety of the carrier protein ThiS. In vitro, sulfur can be provided by H(2)S. The protein is Thiazole synthase of Bradyrhizobium diazoefficiens (strain JCM 10833 / BCRC 13528 / IAM 13628 / NBRC 14792 / USDA 110).